Consider the following 496-residue polypeptide: Serine/threonine-protein kinase Sgk3 (496 aa).

A PX domain is found at 12 to 124 (SCPSVSIPSS…AFLQMDSPRH (113 aa)). Positions 121 to 157 (SPRHQSDPSEDEDERSTPKPHSTSRNINLGPTGNPHA) are disordered. Phosphoserine occurs at positions 126 and 129. Over residues 139–151 (KPHSTSRNINLGP) the composition is skewed to polar residues. Residues 162-464 (FDFLKVIGKG…EETVPYSVCV (303 aa)) enclose the Protein kinase domain. ATP-binding positions include 168 to 176 (IGKGSFGKV) and Lys-191. A Nuclear localization signal motif is present at residues 195–205 (KKIVLNRKEQK). The Proton acceptor role is filled by Asp-286. Position 320 is a phosphothreonine; by PDPK1 (Thr-320). The region spanning 420-496 (ESLSWTDLVQ…YAPPSEDLFL (77 aa)) is the AGC-kinase C-terminal domain. Position 486 is a phosphoserine (Ser-486).

Belongs to the protein kinase superfamily. AGC Ser/Thr protein kinase family. Interacts with GSK3B and FLII. Interacts with PDPK1 in a phosphorylation-dependent manner. Post-translationally, activated by phosphorylation on Ser-486 by an unknown kinase (may be mTORC2 but not confirmed), transforming it into a substrate for PDPK1 which then phosphorylates it on Thr-320.

The protein resides in the cytoplasmic vesicle. It localises to the early endosome. Its subcellular location is the recycling endosome. The catalysed reaction is L-seryl-[protein] + ATP = O-phospho-L-seryl-[protein] + ADP + H(+). It catalyses the reaction L-threonyl-[protein] + ATP = O-phospho-L-threonyl-[protein] + ADP + H(+). With respect to regulation, two specific sites, one in the kinase domain (Thr-320) and the other in the C-terminal regulatory region (Ser-486), need to be phosphorylated for its full activation. Its function is as follows. Serine/threonine-protein kinase which is involved in the regulation of a wide variety of ion channels, membrane transporters, cell growth, proliferation, survival and migration. Up-regulates Na(+) channels: SCNN1A/ENAC and SCN5A, K(+) channels: KCNA3/KV1.3, KCNE1, KCNQ1 and KCNH2/HERG, epithelial Ca(2+) channels: TRPV5 and TRPV6, chloride channel: BSND, creatine transporter: SLC6A8, Na(+)/dicarboxylate cotransporter: SLC13A2/NADC1, Na(+)-dependent phosphate cotransporter: SLC34A2/NAPI-2B, amino acid transporters: SLC1A5/ASCT2 and SLC6A19, glutamate transporters: SLC1A3/EAAT1, SLC1A6/EAAT4 and SLC1A7/EAAT5, glutamate receptors: GRIA1/GLUR1 and GRIK2/GLUR6, Na(+)/H(+) exchanger: SLC9A3/NHE3, and the Na(+)/K(+) ATPase. Plays a role in the regulation of renal tubular phosphate transport and bone density. Phosphorylates NEDD4L and GSK3B. Positively regulates ER transcription activity through phosphorylation of FLII. Negatively regulates the function of ITCH/AIP4 via its phosphorylation and thereby prevents CXCR4 from being efficiently sorted to lysosomes. The polypeptide is Serine/threonine-protein kinase Sgk3 (Sgk3) (Rattus norvegicus (Rat)).